The sequence spans 372 residues: MLLWLFEHLSGYNSSFQVIRYLTLRSLLSILTSLAIGLMLGPVMIRKLQALKYGQAVSSFAPENHAKKMGTPTMGGVLILMSIGISTLLWADLSNPYVWIVLGVMVVFGAVGWADDWIKIRYKDNAGLPARKKFFWTSVASLGAGISLYVIAQNQPNPIHTANMLDLLIPFFKNLSIPLSAVPLGIAFIIFTYLVINGASNAVNLTDGLDGLAIMPIVMVAAGLGVFAYLAGDIRFANYLHIPYVKYTSELVVICSAMVGAGLAFLWYNAHPAQIFMGDVGALALGAMLGTIAVMVRQEIVFAIMGGVFVMEAISVFLQIGSLRMRNKRVFLMAPLHHHYEKQGWKETQVVTRFWIITIMLVVLGLMTLKLR.

The next 10 helical transmembrane spans lie at 25–45, 73–93, 98–118, 134–154, 176–196, 211–231, 251–271, 275–295, 300–320, and 349–369; these read RSLL…PVMI, TMGG…WADL, VWIV…DDWI, FFWT…IAQN, SIPL…YLVI, GLAI…AYLA, LVVI…YNAH, IFMG…IAVM, IVFA…FLQI, and QVVT…LMTL.

This sequence belongs to the glycosyltransferase 4 family. MraY subfamily. The cofactor is Mg(2+).

It localises to the cell inner membrane. The enzyme catalyses UDP-N-acetyl-alpha-D-muramoyl-L-alanyl-gamma-D-glutamyl-meso-2,6-diaminopimeloyl-D-alanyl-D-alanine + di-trans,octa-cis-undecaprenyl phosphate = di-trans,octa-cis-undecaprenyl diphospho-N-acetyl-alpha-D-muramoyl-L-alanyl-D-glutamyl-meso-2,6-diaminopimeloyl-D-alanyl-D-alanine + UMP. Its pathway is cell wall biogenesis; peptidoglycan biosynthesis. In terms of biological role, catalyzes the initial step of the lipid cycle reactions in the biosynthesis of the cell wall peptidoglycan: transfers peptidoglycan precursor phospho-MurNAc-pentapeptide from UDP-MurNAc-pentapeptide onto the lipid carrier undecaprenyl phosphate, yielding undecaprenyl-pyrophosphoryl-MurNAc-pentapeptide, known as lipid I. The sequence is that of Phospho-N-acetylmuramoyl-pentapeptide-transferase from Acinetobacter baylyi (strain ATCC 33305 / BD413 / ADP1).